The sequence spans 413 residues: Gamma-glutamyl phosphate reductase (413 aa).

This sequence belongs to the gamma-glutamyl phosphate reductase family.

The protein localises to the cytoplasm. It catalyses the reaction L-glutamate 5-semialdehyde + phosphate + NADP(+) = L-glutamyl 5-phosphate + NADPH + H(+). Its pathway is amino-acid biosynthesis; L-proline biosynthesis; L-glutamate 5-semialdehyde from L-glutamate: step 2/2. In terms of biological role, catalyzes the NADPH-dependent reduction of L-glutamate 5-phosphate into L-glutamate 5-semialdehyde and phosphate. The product spontaneously undergoes cyclization to form 1-pyrroline-5-carboxylate. The sequence is that of Gamma-glutamyl phosphate reductase from Anoxybacillus flavithermus (strain DSM 21510 / WK1).